The primary structure comprises 92 residues: Small ribosomal subunit protein uS19 (92 aa).

The protein belongs to the universal ribosomal protein uS19 family.

In terms of biological role, protein S19 forms a complex with S13 that binds strongly to the 16S ribosomal RNA. This chain is Small ribosomal subunit protein uS19, found in Lysinibacillus sphaericus (strain C3-41).